Here is a 670-residue protein sequence, read N- to C-terminus: Acetyl-coenzyme A synthetase (670 aa).

CoA contacts are provided by residues 211 to 214 (RGGK) and Thr329. Residues 404–406 (GEP), 428–433 (DTYWQT), Asp519, and Arg534 each bind ATP. Ser542 lines the CoA pocket. Arg545 contacts ATP. Arg603 is a CoA binding site.

The protein belongs to the ATP-dependent AMP-binding enzyme family.

It carries out the reaction acetate + ATP + CoA = acetyl-CoA + AMP + diphosphate. The protein is Acetyl-coenzyme A synthetase (facA) of Emericella nidulans (strain FGSC A4 / ATCC 38163 / CBS 112.46 / NRRL 194 / M139) (Aspergillus nidulans).